Here is a 122-residue protein sequence, read N- to C-terminus: UPF0145 protein BamMC406_5002 (122 aa).

Belongs to the UPF0145 family.

In Burkholderia ambifaria (strain MC40-6), this protein is UPF0145 protein BamMC406_5002.